Consider the following 161-residue polypeptide: Chorion class B protein L12 (161 aa).

The N-terminal stretch at 1-21 is a signal peptide; sequence MAAKLILFVCATALVAQSVLS. The segment at 22 to 52 is left arm; that stretch reads IGCGCGGRGYGGLGYGGLGYGGLGGGCGRGF. 3 consecutive repeat copies span residues 30-34, 35-39, and 40-44. Residues 30–44 are 3 X 5 AA tandem repeats of G-Y-G-G-L; that stretch reads GYGGLGYGGLGYGGL. Residues 53–121 form a central domain region; sequence SGGGLPVATA…GNGAVGITRE (69 aa). The tract at residues 122 to 161 is right arm (Gly-rich tandem repeats); it reads GGFGYGAGYGDGYGLGFGGYGGGYGLGNGGYGGCGCGWGY.

The protein belongs to the chorion protein family.

Its function is as follows. This protein is one of many from the eggshell of the silk moth. This is Chorion class B protein L12 from Bombyx mori (Silk moth).